The following is a 622-amino-acid chain: MSRQTTSVGSSCLDLWREKNDRLVRQAKVAQNSGLTLRRQQLAQDALEGLRGLLHSLQGLPAAVPVLPLELTVTCNFIILRASLAQGFTEDQAQDIQRSLERVLETQEQQGPRLEQGLRELWDSVLRASCLLPELLSALHRLVGLQAALWLSADRLGDLALLLETLNGSQSGASKDLLLLLKTWSPPAEELDAPLTLQDAQGLKDVLLTAFAYRQGLQELITGNPDKALSSLHEAASGLCPRPVLVQVYTALGSCHRKMGNPQRALLYLVAALKEGSAWGPPLLEASRLYQQLGDTTAELESLELLVEALNVPCSSKAPQFLIEVELLLPPPDLASPLHCGTQSQTKHILASRCLQTGRAGDAAEHYLDLLALLLDSSEPRFSPPPSPPGPCMPEVFLEAAVALIQAGRAQDALTLCEELLSRTSSLLPKMSRLWEDARKGTKELPYCPLWVSATHLLQGQAWVQLGAQKVAISEFSRCLELLFRATPEEKEQGAAFNCEQGCKSDAALQQLRAAALISRGLEWVASGQDTKALQDFLLSVQMCPGNRDTYFHLLQTLKRLDRRDEATALWWRLEAQTKGSHEDALWSLPLYLESYLSWIRPSDRDAFLEEFRTSLPKSCDL.

Serine 7 carries the post-translational modification Phosphoserine. TPR repeat units lie at residues 246–279, 344–377, 453–486, and 514–547; these read VQVY…GSAW, SQTK…LLDS, SATH…LFRA, and AAAL…CPGN.

In terms of assembly, belongs to the multisubunit FA complex composed of FANCA, FANCB, FANCC, FANCE, FANCF, FANCG, FANCL/PHF9 and FANCM. The complex is not found in FA patients. In complex with FANCF, FANCA and FANCL, but not with FANCC, nor FANCE, interacts with HES1; this interaction may be essential for the stability and nuclear localization of FA core complex proteins. The complex with FANCC and FANCG may also include EIF2AK2 and HSP70. When phosphorylated at Ser-7, forms a complex with BRCA2, FANCD2 and XRCC3. In terms of tissue distribution, highly expressed in testis and thymus. Found in lymphoblasts.

It is found in the nucleus. The protein resides in the cytoplasm. In terms of biological role, DNA repair protein that may operate in a postreplication repair or a cell cycle checkpoint function. May be implicated in interstrand DNA cross-link repair and in the maintenance of normal chromosome stability. Candidate tumor suppressor gene. The chain is Fanconi anemia group G protein (FANCG) from Homo sapiens (Human).